The following is a 314-amino-acid chain: MENETFGTELPDTWVGRIDGDNPEHALWYTTVSPLPEPDEVEEGVVTLGFASDEGNLRNHGTAGAALGPDAIRGVLGLVAVHDARPRYDAGTIRVGGDLERGHDELSDAVETIARAGHLPIVLGGGHEAGFGSHRGIYRARGSSPAIINLDAHLDLRAAERPTNGTPFRQVRELVGEEFRYSVLGVSVPNNTDFLFNAAREFGTEVTTDDEINAMSPQEAADHALALVRDAEHIHLTVDIDVLSEALAPGTGSPAAVGVELGRIRAICTGLAATGRLTLVDVVEVNPRLDHNNQTARVAARLIHEIAEAHLKAT.

Mn(2+) contacts are provided by histidine 127, aspartate 151, histidine 153, aspartate 155, aspartate 239, and aspartate 241.

Belongs to the arginase family. Mn(2+) serves as cofactor.

It carries out the reaction N-formimidoyl-L-glutamate + H2O = formamide + L-glutamate. Its pathway is amino-acid degradation; L-histidine degradation into L-glutamate; L-glutamate from N-formimidoyl-L-glutamate (hydrolase route): step 1/1. Its function is as follows. Catalyzes the conversion of N-formimidoyl-L-glutamate to L-glutamate and formamide. This Corynebacterium efficiens (strain DSM 44549 / YS-314 / AJ 12310 / JCM 11189 / NBRC 100395) protein is Formimidoylglutamase.